Consider the following 539-residue polypeptide: Lipid scramblase CLPTM1L (539 aa).

Topologically, residues 1 to 10 (MWSGRSSFTS) are cytoplasmic. A helical membrane pass occupies residues 11–31 (LVVGVFLVYVVHTCWVMYGIV). The Extracellular segment spans residues 32–285 (YTRPCSGDSN…LKGIFVDTNL (254 aa)). Asparagine 91 and asparagine 101 each carry an N-linked (GlcNAc...) asparagine glycan. A helical transmembrane segment spans residues 286–306 (YLLALTFFVAAFHLLFDFLAF). Residues 307-325 (KSDISFWKKKKSMIGMSTK) are Cytoplasmic-facing. The helical transmembrane segment at 326 to 342 (AVLWRCFSTVVIFLFLL) threads the bilayer. Residues 343–403 (DEQTSLLVLI…TEKYDAQAMK (61 aa)) are Extracellular-facing. A helical membrane pass occupies residues 404-424 (YLSYLLYPLCVGGAVYSLLNI). Topologically, residues 425–429 (KYKSW) are cytoplasmic. A helical membrane pass occupies residues 430–450 (YSWLINSFVNGVYAFGFLFML). At 451–539 (PQLFVNYKMK…EQPKRKPHPD (89 aa)) the chain is on the extracellular side.

It belongs to the CLPTM1 family.

Its subcellular location is the endoplasmic reticulum membrane. It carries out the reaction a 6-(alpha-D-glucosaminyl)-1-(1,2-diacyl-sn-glycero-3-phospho)-1D-myo-inositol(in) = a 6-(alpha-D-glucosaminyl)-1-(1,2-diacyl-sn-glycero-3-phospho)-1D-myo-inositol(out). It catalyses the reaction 6-(alpha-D-glucosaminyl)-(1-octadecanoyl,2-(9Z)-octadecenoyl-sn-glycero-3-phospho)-1D-myo-inositol(in) = 6-(alpha-D-glucosaminyl)-(1-octadecanoyl,2-(9Z)-octadecenoyl-sn-glycero-3-phospho)-1D-myo-inositol(out). The enzyme catalyses a 1,2-diacyl-sn-glycero-3-phospho-(1D-myo-inositol)(in) = a 1,2-diacyl-sn-glycero-3-phospho-(1D-myo-inositol)(out). The catalysed reaction is a 1,2-diacyl-sn-glycero-3-phosphocholine(in) = a 1,2-diacyl-sn-glycero-3-phosphocholine(out). It carries out the reaction a 1,2-diacyl-sn-glycero-3-phosphoethanolamine(in) = a 1,2-diacyl-sn-glycero-3-phosphoethanolamine(out). In terms of biological role, scramblase that mediates the translocation of glucosaminylphosphatidylinositol (alpha-D-GlcN-(1-6)-(1,2-diacyl-sn-glycero-3-phospho)-1D-myo-inositol, GlcN-PI) across the endoplasmic reticulum (ER) membrane, from the cytosolic leaflet to the luminal leaflet of the ER membrane, where it participates in the biosynthesis of glycosylphosphatidylinositol (GPI). GPI is a lipid glycoconjugate involved in post-translational modification of proteins. Can also translocate 1,2-diacyl-sn-glycero-3-phospho-(1D-myo-inositol) (phosphatidylinositol or PI), as well as several other phospholipids (1,2-diacyl-sn-glycero-3-phosphocholine, 1,2-diacyl-sn-glycero-3-phosphoethanolamine), and N-acetylglucosaminylphosphatidylinositol (GlcNAc-PI) in vitro. The sequence is that of Lipid scramblase CLPTM1L (Clptm1l) from Mus musculus (Mouse).